The following is a 41-amino-acid chain: Large ribosomal subunit protein bL36 (41 aa).

This sequence belongs to the bacterial ribosomal protein bL36 family.

The sequence is that of Large ribosomal subunit protein bL36 from Zymomonas mobilis subsp. mobilis (strain ATCC 31821 / ZM4 / CP4).